A 1026-amino-acid chain; its full sequence is Chromodomain-helicase-DNA-binding protein 1-like (1026 aa).

Residues 47 to 212 enclose the Helicase ATP-binding domain; it reads SLCMKNQQGC…YSLLTFIQPS (166 aa). Residue 60–67 coordinates ATP; sequence DEMGLGKT. Residues 163–166 carry the DEAH box motif; sequence DEAH. The region spanning 340-494 is the Helicase C-terminal domain; it reads LLDSMLAYLQ…EGRFSLLDQA (155 aa). Residues 540–668 are a coiled coil; it reads LTDEEHAKLN…EELNYKKKMA (129 aa). A regulatory linker segment (RLS) region spans residues 594-628; sequence AEMEDAEKEGRALRNKAGVSLSGPLINPARKKRPL. Positions 606–655 are disordered; that stretch reads LRNKAGVSLSGPLINPARKKRPLTEAELEERRQKRQAAAAKRAKLQEERK. Residues 608–666 form a required for ATPase activity region; it reads NKAGVSLSGPLINPARKKRPLTEAELEERRQKRQAAAAKRAKLQEERKKQQEELNYKKK. A Macro domain is found at 697-870; it reads HVSFSSTDSD…IFTSIYYYRR (174 aa). Residues 877 to 907 are compositionally biased toward low complexity; sequence VSSTASTTTPSSSKPAASSPSESPHSSSPPA. A disordered region spans residues 877–929; it reads VSSTASTTTPSSSKPAASSPSESPHSSSPPANREGLTKSAELSTTSHEGPGAP. The 94-residue stretch at 930-1023 folds into the BRCT domain; sequence GLADFMRGVH…RKVSVSKYVI (94 aa).

This sequence belongs to the SNF2/RAD54 helicase family. In terms of assembly, interacts with nucleosomes; interacts with the acidic patch of histones.

The protein resides in the nucleus. It localises to the chromosome. It carries out the reaction ATP + H2O = ADP + phosphate + H(+). Its activity is regulated as follows. Adopts an inactive conformation in absence of DNA damage. Binding to poly-ADP-ribosylated histones activates the ATP-dependent chromatin remodeler activity. Its function is as follows. ATP-dependent chromatin remodeler that mediates chromatin-remodeling following DNA damage. Recruited to DNA damage sites through interaction with poly-ADP-ribose: specifically recognizes and binds histones that are poly-ADP-ribosylated on serine residues in response to DNA damage. Poly-ADP-ribose-binding activates the ATP-dependent chromatin remodeler activity, thereby regulating chromatin during DNA repair. Catalyzes nucleosome sliding away from DNA breaks in an ATP-dependent manner. The protein is Chromodomain-helicase-DNA-binding protein 1-like (chd1l) of Danio rerio (Zebrafish).